We begin with the raw amino-acid sequence, 246 residues long: Phosphomannomutase 2 (246 aa).

A2 is modified (N-acetylalanine). D12 (nucleophile) is an active-site residue. The Mg(2+) site is built by D12 and D14. D14 serves as the catalytic Proton donor/acceptor. 6 residues coordinate alpha-D-mannose 1-phosphate: R21, R123, R134, R141, S179, and D181. D209, F221, D223, and T226 together coordinate Mg(2+).

It belongs to the eukaryotic PMM family. Homodimer.

The protein localises to the cytoplasm. The catalysed reaction is alpha-D-mannose 1-phosphate = D-mannose 6-phosphate. It participates in nucleotide-sugar biosynthesis; GDP-alpha-D-mannose biosynthesis; alpha-D-mannose 1-phosphate from D-fructose 6-phosphate: step 2/2. Its function is as follows. Involved in the synthesis of the GDP-mannose and dolichol-phosphate-mannose required for a number of critical mannosyl transfer reactions. In Bos taurus (Bovine), this protein is Phosphomannomutase 2 (PMM2).